An 89-amino-acid chain; its full sequence is Small ribosomal subunit protein uS19 (89 aa).

The protein belongs to the universal ribosomal protein uS19 family.

Functionally, protein S19 forms a complex with S13 that binds strongly to the 16S ribosomal RNA. In Phocaeicola vulgatus (strain ATCC 8482 / DSM 1447 / JCM 5826 / CCUG 4940 / NBRC 14291 / NCTC 11154) (Bacteroides vulgatus), this protein is Small ribosomal subunit protein uS19.